A 905-amino-acid polypeptide reads, in one-letter code: DNA gyrase subunit A (905 aa).

In terms of domain architecture, Topo IIA-type catalytic spans isoleucine 35–leucine 524. Tyrosine 123 (O-(5'-phospho-DNA)-tyrosine intermediate) is an active-site residue. Positions glutamine 551–glycine 557 match the GyrA-box motif. The disordered stretch occupies residues threonine 885–valine 905. Residues alanine 886–valine 905 are compositionally biased toward acidic residues.

This sequence belongs to the type II topoisomerase GyrA/ParC subunit family. As to quaternary structure, heterotetramer, composed of two GyrA and two GyrB chains. In the heterotetramer, GyrA contains the active site tyrosine that forms a transient covalent intermediate with DNA, while GyrB binds cofactors and catalyzes ATP hydrolysis.

It localises to the cytoplasm. It carries out the reaction ATP-dependent breakage, passage and rejoining of double-stranded DNA.. In terms of biological role, a type II topoisomerase that negatively supercoils closed circular double-stranded (ds) DNA in an ATP-dependent manner to modulate DNA topology and maintain chromosomes in an underwound state. Negative supercoiling favors strand separation, and DNA replication, transcription, recombination and repair, all of which involve strand separation. Also able to catalyze the interconversion of other topological isomers of dsDNA rings, including catenanes and knotted rings. Type II topoisomerases break and join 2 DNA strands simultaneously in an ATP-dependent manner. This Rickettsia conorii (strain ATCC VR-613 / Malish 7) protein is DNA gyrase subunit A.